The primary structure comprises 400 residues: Na(+)/H(+) antiporter NhaA 1 (400 aa).

Helical transmembrane passes span 25–45 (IVLM…FSSM), 67–87 (ILHW…GMEI), 103–123 (ILPV…YALF), 130–150 (IIGW…ILSL), 159–179 (IIIF…IVIA), 184–204 (SEIS…IILA), 213–233 (WLYI…GVHE), 264–284 (VLTP…NSGI), 303–323 (IIFG…YILV), 339–359 (LYGA…VSSL), and 372–392 (ISII…FKII).

Belongs to the NhaA Na(+)/H(+) (TC 2.A.33) antiporter family.

The protein localises to the cell membrane. The catalysed reaction is Na(+)(in) + 2 H(+)(out) = Na(+)(out) + 2 H(+)(in). In terms of biological role, na(+)/H(+) antiporter that extrudes sodium in exchange for external protons. The polypeptide is Na(+)/H(+) antiporter NhaA 1 (Clostridium beijerinckii (strain ATCC 51743 / NCIMB 8052) (Clostridium acetobutylicum)).